The sequence spans 518 residues: 12S seed storage globulin 1 (518 aa).

The first 24 residues, 1-24 (MATTRFPSLLFYSCIFLLCNGSMA), serve as a signal peptide directing secretion. 2 disulfide bridges follow: cysteine 45-cysteine 78 and cysteine 121-cysteine 324. The Cupin type-1 1 domain maps to 50–240 (LQAFEPLRQV…ALGISQQAAQ (191 aa)). Over residues 281–295 (QSQQEQSTQYQVGQS) the composition is skewed to low complexity. The interval 281–311 (QSQQEQSTQYQVGQSPQYQEGQSTQYQSGQS) is disordered. Residues 296–311 (PQYQEGQSTQYQSGQS) are compositionally biased toward polar residues. One can recognise a Cupin type-1 2 domain in the interval 330-479 (QNIENPKRAD…AYRISRQESQ (150 aa)). Residues 496 to 518 (FAQTGSQSYQDEGESSSTEKASE) form a disordered region.

Belongs to the 11S seed storage protein (globulins) family. As to quaternary structure, hexamer; each subunit is composed of an acidic and a basic chain derived from a single precursor and linked by a disulfide bond.

This is a seed storage protein. This chain is 12S seed storage globulin 1, found in Avena sativa (Oat).